An 804-amino-acid polypeptide reads, in one-letter code: DNA gyrase subunit A (804 aa).

The 465-residue stretch at 31–495 folds into the Topo IIA-type catalytic domain; sequence IPDVRDGLKP…QSIEYNEEEL (465 aa). The O-(5'-phospho-DNA)-tyrosine intermediate role is filled by Tyr-119. The GyrA-box motif lies at 522–528; that stretch reads QKRGGKG.

Belongs to the type II topoisomerase GyrA/ParC subunit family. As to quaternary structure, heterotetramer, composed of two GyrA and two GyrB chains. In the heterotetramer, GyrA contains the active site tyrosine that forms a transient covalent intermediate with DNA, while GyrB binds cofactors and catalyzes ATP hydrolysis.

The protein resides in the cytoplasm. It catalyses the reaction ATP-dependent breakage, passage and rejoining of double-stranded DNA.. Functionally, a type II topoisomerase that negatively supercoils closed circular double-stranded (ds) DNA in an ATP-dependent manner to modulate DNA topology and maintain chromosomes in an underwound state. Negative supercoiling favors strand separation, and DNA replication, transcription, recombination and repair, all of which involve strand separation. Also able to catalyze the interconversion of other topological isomers of dsDNA rings, including catenanes and knotted rings. Type II topoisomerases break and join 2 DNA strands simultaneously in an ATP-dependent manner. The sequence is that of DNA gyrase subunit A from Thermotoga maritima (strain ATCC 43589 / DSM 3109 / JCM 10099 / NBRC 100826 / MSB8).